The chain runs to 212 residues: Imidazole glycerol phosphate synthase subunit HisH (212 aa).

In terms of domain architecture, Glutamine amidotransferase type-1 spans 3 to 212 (DIAIVDYGMG…LGNFVRWKPV (210 aa)). Cys-82 serves as the catalytic Nucleophile. Active-site residues include His-191 and Glu-193.

In terms of assembly, heterodimer of HisH and HisF.

Its subcellular location is the cytoplasm. It catalyses the reaction 5-[(5-phospho-1-deoxy-D-ribulos-1-ylimino)methylamino]-1-(5-phospho-beta-D-ribosyl)imidazole-4-carboxamide + L-glutamine = D-erythro-1-(imidazol-4-yl)glycerol 3-phosphate + 5-amino-1-(5-phospho-beta-D-ribosyl)imidazole-4-carboxamide + L-glutamate + H(+). The catalysed reaction is L-glutamine + H2O = L-glutamate + NH4(+). Its pathway is amino-acid biosynthesis; L-histidine biosynthesis; L-histidine from 5-phospho-alpha-D-ribose 1-diphosphate: step 5/9. IGPS catalyzes the conversion of PRFAR and glutamine to IGP, AICAR and glutamate. The HisH subunit catalyzes the hydrolysis of glutamine to glutamate and ammonia as part of the synthesis of IGP and AICAR. The resulting ammonia molecule is channeled to the active site of HisF. This is Imidazole glycerol phosphate synthase subunit HisH from Nitrosospira multiformis (strain ATCC 25196 / NCIMB 11849 / C 71).